Reading from the N-terminus, the 464-residue chain is Chitotriosidase-1 (464 aa).

Residues 1 to 21 form the signal peptide; that stretch reads MVQSLAWAGVMTLLMVQWGSA. The GH18 domain maps to 22–386; the sequence is AKLVCYLTNW…RTLRQELNLP (365 aa). A disulfide bond links Cys-26 and Cys-51. Chitin contacts are provided by residues 70-71 and 97-100; these read EH and GGWT. The Proton donor role is filled by Glu-140. Chitin is bound at residue 210–213; the sequence is MAYD. Cys-307 and Cys-368 are oxidised to a cystine. The tract at residues 385 to 416 is disordered; the sequence is LPSETPRSPEQIIPEPRPSSMPEQGPSPGLDN. A Chitin-binding type-2 domain is found at 415-464; sequence DNFCQGKADGVYPNPGDESTYYNCGGGRLFQQSCPPGLVFRASCKCCTWS. Cys-448 and Cys-461 are joined by a disulfide.

Belongs to the glycosyl hydrolase 18 family. Chitinase class II subfamily. As to quaternary structure, monomer. In terms of tissue distribution, highly expressed in tongue, stomach, kidney, brain, skin, testis, and bone marrow. Low level of expression was found in lung, heart, spleen, small intestine, and liver. Not detectable in pancreas, salivary gland, large intestine, uterus, or peripheral blood mononuclear cells (PBMC).

The protein resides in the secreted. It localises to the lysosome. The catalysed reaction is Random endo-hydrolysis of N-acetyl-beta-D-glucosaminide (1-&gt;4)-beta-linkages in chitin and chitodextrins.. Its function is as follows. Degrades chitin, chitotriose and chitobiose. May participate in the defense against nematodes and other pathogens. In Mus musculus (Mouse), this protein is Chitotriosidase-1 (Chit1).